The chain runs to 166 residues: Cytochrome P450 regulator dap1 (166 aa).

The chain crosses the membrane as a helical span at residues 4-21 (TQVVFIVTLFLYLLITRW). The Cytochrome b5 heme-binding domain maps to 42 to 145 (DYTPAELKEY…QKYQAVGRLI (104 aa)). The residue at position 108 (serine 108) is a Phosphoserine. Residue tyrosine 138 participates in heme binding.

It belongs to the cytochrome b5 family. MAPR subfamily. As to quaternary structure, interacts with erg5 and erg11.

It localises to the endoplasmic reticulum. Its subcellular location is the membrane. Required for sterol biosynthesis. Functions as a positive regulator of cytochrome P450 enzymes erg5 and erg11. Function requires bound heme. This is Cytochrome P450 regulator dap1 (dap1) from Schizosaccharomyces pombe (strain 972 / ATCC 24843) (Fission yeast).